The following is a 432-amino-acid chain: Fibrinogen gamma chain (432 aa).

Residues 1–24 (MGRIGTPVFLAFLSALTCSLQVHA) form the signal peptide. The Fibrinogen C-terminal domain maps to 169-412 (KISPITGKDC…MTTMKLLPMG (244 aa)). A disulfide bridge links C178 with C207. A glycan (N-linked (GlcNAc...) asparagine) is linked at N227. D340, D342, Y344, and G346 together coordinate Ca(2+). A disulfide bond links C348 and C361. Residues 413-432 (RDLSGHGGQQQSKGNSRGDN) are disordered. Residues 421–432 (QQQSKGNSRGDN) are compositionally biased toward polar residues.

As to quaternary structure, heterohexamer; disulfide linked. Contains 2 sets of 3 non-identical chains (alpha, beta and gamma). The 2 heterotrimers are in head to head conformation with the N-termini in a small central domain. Post-translationally, conversion of fibrinogen to fibrin is triggered by thrombin, which cleaves fibrinopeptides A and B from alpha and beta chains, and thus exposes the N-terminal polymerization sites responsible for the formation of the soft clot. The soft clot is converted into the hard clot by factor XIIIA which catalyzes the epsilon-(gamma-glutamyl)lysine cross-linking between gamma chains (stronger) and between alpha chains (weaker) of different monomers.

It localises to the secreted. Together with fibrinogen alpha (FGA) and fibrinogen beta (FGB), polymerizes to form an insoluble fibrin matrix. Has a major function in hemostasis as one of the primary components of blood clots. The chain is Fibrinogen gamma chain (FGG) from Petromyzon marinus (Sea lamprey).